The sequence spans 772 residues: E3 ubiquitin-protein ligase UHRF1 (772 aa).

The Ubiquitin-like domain maps to 1-77 (MWIQVRTMDG…IVQLLVRQIP (77 aa)). Residues 90-111 (SDASAGCGSGQRDSDSGSGEGA) form a disordered region. 2 tudor-like regions span residues 129–205 (SLYK…LRAR) and 212–281 (EIKV…IEEP). The segment at 291–299 (PQKRQNGPE) is linker. A PHD-type zinc finger spans residues 297-364 (GPECKHCKDN…DWYCPDCRND (68 aa)). Histone H3R2me0 binding stretches follow at residues 331-335 (CDECD) and 351-353 (PQD). A YDG domain is found at 417 to 580 (GPIPGVPVGT…FLVWRYLLRR (164 aa)). The tract at residues 443 to 444 (HV) is required to promote base flipping. Residues 461 to 462 (AG) and Asp467 each bind DNA. Required for formation of a 5-methylcytosine-binding pocket stretches follow at residues 464–467 (YEDD) and 476–479 (YTGS). Residues 615–626 (SKEREKENKTED) show a composition bias toward basic and acidic residues. Positions 615 to 649 (SKEREKENKTEDEPIDSPSKGKRKRNSDNEQTAAK) are disordered. The segment at 703-742 (CICCQEVVYEPVTTECHHNICKGCLDRSFKALVHSCPACR) adopts an RING-type zinc-finger fold.

The protein resides in the nucleus. The catalysed reaction is S-ubiquitinyl-[E2 ubiquitin-conjugating enzyme]-L-cysteine + [acceptor protein]-L-lysine = [E2 ubiquitin-conjugating enzyme]-L-cysteine + N(6)-ubiquitinyl-[acceptor protein]-L-lysine.. The protein operates within protein modification; protein ubiquitination. Functionally, multidomain protein that acts as a key epigenetic regulator by bridging DNA methylation and chromatin modification. Specifically recognizes and binds hemimethylated DNA at replication forks via its YDG domain and recruits dnmt1 methyltransferase to ensure faithful propagation of the DNA methylation patterns through DNA replication. In addition to its role in maintenance of DNA methylation, also plays a key role in chromatin modification: through its tudor-like regions and PHD-type zinc fingers, specifically recognizes and binds histone H3 trimethylated at 'Lys-9' (H3K9me3) and unmethylated at 'Arg-2' (H3R2me0), respectively, and recruits chromatin proteins. Enriched in pericentric heterochromatin where it recruits different chromatin modifiers required for this chromatin replication. Also localizes to euchromatic regions where it negatively regulates transcription possibly by impacting DNA methylation and histone modifications. Has E3 ubiquitin-protein ligase activity by mediating the ubiquitination of target proteins. However, it is still unclear how E3 ubiquitin-protein ligase activity is related to its role in chromatin in vivo. This Xenopus laevis (African clawed frog) protein is E3 ubiquitin-protein ligase UHRF1 (uhrf1).